A 411-amino-acid polypeptide reads, in one-letter code: Serine/threonine transporter SstT (411 aa).

The next 8 helical transmembrane spans lie at 17–37, 41–61, 79–99, 138–158, 189–209, 214–234, 295–315, and 327–347; these read IMVGLVAGIIVALVSPATASA, LGALFVGALKAVAPVLVLVLV, ILFLYLLGTFAAALVAVVVSF, ALISANYIGILAWAVGLGLAL, LGIFGLVASTLAETGFGALWG, LVVLIGCMLLVALVLNPLIVF, MAGAAITITVLTLAAVHTLGI, and VVAAVCACGASGVAGGSLLLI.

This sequence belongs to the dicarboxylate/amino acid:cation symporter (DAACS) (TC 2.A.23) family.

The protein localises to the cell inner membrane. It carries out the reaction L-serine(in) + Na(+)(in) = L-serine(out) + Na(+)(out). The enzyme catalyses L-threonine(in) + Na(+)(in) = L-threonine(out) + Na(+)(out). Functionally, involved in the import of serine and threonine into the cell, with the concomitant import of sodium (symport system). The protein is Serine/threonine transporter SstT of Serratia proteamaculans (strain 568).